Consider the following 158-residue polypeptide: NADH-quinone oxidoreductase subunit B (158 aa).

[4Fe-4S] cluster contacts are provided by Cys37, Cys38, Cys102, and Cys132.

The protein belongs to the complex I 20 kDa subunit family. NDH-1 is composed of 14 different subunits. Subunits NuoB, C, D, E, F, and G constitute the peripheral sector of the complex. [4Fe-4S] cluster is required as a cofactor.

The protein localises to the cell inner membrane. It catalyses the reaction a quinone + NADH + 5 H(+)(in) = a quinol + NAD(+) + 4 H(+)(out). In terms of biological role, NDH-1 shuttles electrons from NADH, via FMN and iron-sulfur (Fe-S) centers, to quinones in the respiratory chain. Couples the redox reaction to proton translocation (for every two electrons transferred, four hydrogen ions are translocated across the cytoplasmic membrane), and thus conserves the redox energy in a proton gradient. This chain is NADH-quinone oxidoreductase subunit B, found in Aromatoleum aromaticum (strain DSM 19018 / LMG 30748 / EbN1) (Azoarcus sp. (strain EbN1)).